A 429-amino-acid polypeptide reads, in one-letter code: Saccharopine dehydrogenase-like oxidoreductase (429 aa).

The residue at position 2 (alanine 2) is an N-acetylalanine. Serine 217 is subject to Phosphoserine.

The protein belongs to the saccharopine dehydrogenase family.

This chain is Saccharopine dehydrogenase-like oxidoreductase (SCCPDH), found in Homo sapiens (Human).